A 332-amino-acid polypeptide reads, in one-letter code: Glyceraldehyde-3-phosphate dehydrogenase 3 (332 aa).

Residues arginine 11, isoleucine 12, and aspartate 33 each coordinate NAD(+). Glycyl lysine isopeptide (Lys-Gly) (interchain with G-Cter in ubiquitin) cross-links involve residues lysine 46 and lysine 63. Threonine 120 serves as a coordination point for NAD(+). Residue 149-151 (SCT) coordinates D-glyceraldehyde 3-phosphate. Residue cysteine 150 is the Nucleophile of the active site. 2 positions are modified to cysteine persulfide: cysteine 150 and cysteine 154. Lysine 160 participates in a covalent cross-link: Glycyl lysine isopeptide (Lys-Gly) (interchain with G-Cter in URM1). D-glyceraldehyde 3-phosphate contacts are provided by residues threonine 180, 209–210 (TG), and arginine 232. The residue at position 302 (serine 302) is a Phosphoserine. Residue lysine 307 forms a Glycyl lysine isopeptide (Lys-Gly) (interchain with G-Cter in URM1) linkage. Positions 314 and 318 each coordinate NAD(+).

This sequence belongs to the glyceraldehyde-3-phosphate dehydrogenase family. As to quaternary structure, homotetramer. Post-translationally, conjugated to URM1, a ubiquitin-like protein, in response to oxidative stresses. The attachment of URM1 to lysine residues exclusively depends on the presence of a peroxidatic cysteine in the target protein, with low specificity for the particular residue, motif, or structural context at which urmylation can occur. The URM1-conjugation reaction is mechanistically and directly coupled to the process of cysteine persulfidation, transfering the sulfur atom of the URM1 thiocarboxyl group to redox-active cysteine residues in the target protein if it is exposed to oxidative conditions. Persulfidated on specific redox-active cysteine residues. Persulfidation (also called protein S-sulfhydration) may provide a molecular mechanism that enables cells to protect vulnerable cysteine residues from reactive oxygen species (ROS) under stress conditions.

Its subcellular location is the cytoplasm. The protein resides in the mitochondrion. The enzyme catalyses D-glyceraldehyde 3-phosphate + phosphate + NAD(+) = (2R)-3-phospho-glyceroyl phosphate + NADH + H(+). The catalysed reaction is NADH + H2O = (6R)-NADHX. It carries out the reaction NADH + H2O = (6S)-NADHX. It catalyses the reaction NADPH + H2O = (6R)-NADPHX. The enzyme catalyses NADPH + H2O = (6S)-NADPHX. Its pathway is carbohydrate degradation; glycolysis; pyruvate from D-glyceraldehyde 3-phosphate: step 1/5. In terms of biological role, glyceraldehyde-3-phosphate dehydrogenase (GAPDH) involved in glycolysis and gluconeogenesis. Catalyzes the reaction of glyceraldehyde-3-phosphate to 1,3 bis-phosphoglycerate. The contribution of the TDH1, TDH2, and TDH3 to the total glyceraldehyde-3-phosphate dehydrogenase activity is 10-15, 25-30, and 50-60%, respectively. As a side activity, catalyzes the hydration of the nicotinamide ring of NADH or NADPH at the C6 position to give the corresponding hydrates, NADHX and NADPHX, which exist as R and S epimers, that cannot act as electron donors or acceptors and inhibit several dehydrogenases, making them toxic. The polypeptide is Glyceraldehyde-3-phosphate dehydrogenase 3 (Saccharomyces cerevisiae (strain ATCC 204508 / S288c) (Baker's yeast)).